Consider the following 510-residue polypeptide: Ferredoxin--nitrite reductase (510 aa).

Positions 396, 402, 437, and 441 each coordinate [4Fe-4S] cluster. Cysteine 441 is a siroheme binding site.

It belongs to the nitrite and sulfite reductase 4Fe-4S domain family.

The enzyme catalyses 6 oxidized [2Fe-2S]-[ferredoxin] + NH4(+) + 2 H2O = nitrite + 6 reduced [2Fe-2S]-[ferredoxin] + 8 H(+). In Leptolyngbya laminosa (Phormidium laminosum), this protein is Ferredoxin--nitrite reductase (nirA).